We begin with the raw amino-acid sequence, 352 residues long: Anthranilate phosphoribosyltransferase (352 aa).

5-phospho-alpha-D-ribose 1-diphosphate is bound by residues Gly83, 86-87 (GD), Thr91, 93-96 (NIST), 111-119 (KHGGRSVSS), and Ala123. Gly83 is a binding site for anthranilate. Ser95 provides a ligand contact to Mg(2+). Arg169 lines the anthranilate pocket. Positions 228 and 229 each coordinate Mg(2+).

It belongs to the anthranilate phosphoribosyltransferase family. As to quaternary structure, homodimer. Mg(2+) is required as a cofactor.

It catalyses the reaction N-(5-phospho-beta-D-ribosyl)anthranilate + diphosphate = 5-phospho-alpha-D-ribose 1-diphosphate + anthranilate. It functions in the pathway amino-acid biosynthesis; L-tryptophan biosynthesis; L-tryptophan from chorismate: step 2/5. Its function is as follows. Catalyzes the transfer of the phosphoribosyl group of 5-phosphorylribose-1-pyrophosphate (PRPP) to anthranilate to yield N-(5'-phosphoribosyl)-anthranilate (PRA). The polypeptide is Anthranilate phosphoribosyltransferase (Neisseria meningitidis serogroup A / serotype 4A (strain DSM 15465 / Z2491)).